The following is a 530-amino-acid chain: Carbohydrate sulfotransferase 2 (530 aa).

Residues 1–54 are Cytoplasmic-facing; sequence MSRSPQRALPPGALPRLLQAAPAAAPRALLPQWPRRPGRRWPASPLGMKVFRRK. Residues 55-75 traverse the membrane as a helical; Signal-anchor for type II membrane protein segment; that stretch reads ALVLCAGYALLLVLTMLNLLD. Residues 76-530 are Lumenal-facing; that stretch reads YKWHKEPLQQ…SKTLLRKPRL (455 aa). The tract at residues 89–119 is disordered; that stretch reads DGPLGAAAGAAGGSWGRPGPPPAGPPRAHAR. 173–179 lines the 3'-phosphoadenylyl sulfate pocket; that stretch reads WRSGSSF. Asn243 carries N-linked (GlcNAc...) asparagine glycosylation. 332–340 serves as a coordination point for 3'-phosphoadenylyl sulfate; that stretch reads RDPRAVASS. Residues Asn457 and Asn475 are each glycosylated (N-linked (GlcNAc...) asparagine).

Belongs to the sulfotransferase 1 family. Gal/GlcNAc/GalNAc subfamily. As to quaternary structure, homodimer; disulfide-linked. Homodimerization is not essential for enzyme activity. Glycosylation at Asn-475 is required for catalytic activity. As to expression, widely expressed. Highly expressed in bone marrow, peripheral blood leukocytes, spleen, brain, spinal cord, ovary and placenta. Expressed by high endothelial cells (HEVs) and leukocytes.

The protein localises to the golgi apparatus. Its subcellular location is the trans-Golgi network membrane. The enzyme catalyses 3-O-{N-acetyl-beta-D-glucosaminyl-(1-&gt;3)-beta-D-galactosyl-(1-&gt;3)-N-acetyl-alpha-D-galactosaminyl}-L-threonyl-[protein] + 3'-phosphoadenylyl sulfate = 3-O-{6-O-sulfo-N-acetyl-beta-D-glucosaminyl-(1-&gt;3)-beta-D-galactosyl-(1-&gt;3)-N-acetyl-alpha-D-galactosaminyl}-L-threonyl-[protein] + adenosine 3',5'-bisphosphate + H(+). The catalysed reaction is 3-O-{N-acetyl-beta-D-glucosaminyl-(1-&gt;3)-beta-D-galactosyl-(1-&gt;3)-N-acetyl-alpha-D-galactosaminyl}-L-seryl-[protein] + 3'-phosphoadenylyl sulfate = 3-O-{6-O-sulfo-N-acetyl-beta-D-glucosaminyl-(1-&gt;3)-beta-D-galactosyl-(1-&gt;3)-N-acetyl-alpha-D-galactosaminyl}-L-seryl-[protein] + adenosine 3',5'-bisphosphate + H(+). It catalyses the reaction a 3-O-{beta-D-galactosyl-(1-&gt;3)-[N-acetyl-beta-D-glucosaminyl-(1-&gt;6)]-N-acetyl-alpha-D-galactosaminyl}-L-threonyl-[protein] + 3'-phosphoadenylyl sulfate = 3-O-{beta-D-galactosyl-(1-&gt;3)-[6-O-sulfo-N-acetyl-beta-D-glucosaminyl-(1-&gt;6)]-N-acetyl-alpha-D-galactosaminyl}-L-threonyl-[protein] + adenosine 3',5'-bisphosphate + H(+). It carries out the reaction 3-O-{beta-D-galactosyl-(1-&gt;3)-[N-acetyl-beta-D-glucosaminyl-(1-&gt;6)]-N-acetyl-alpha-D-galactosaminyl}-L-seryl-[protein] + 3'-phosphoadenylyl sulfate = 3-O-{beta-D-galactosyl-(1-&gt;3)-[6-O-sulfo-N-acetyl-beta-D-glucosaminyl-(1-&gt;6)]-N-acetyl-alpha-D-galactosaminyl}-L-seryl-[protein] + adenosine 3',5'-bisphosphate + H(+). It participates in protein modification; carbohydrate sulfation. Functionally, sulfotransferase that utilizes 3'-phospho-5'-adenylyl sulfate (PAPS) as sulfonate donor to catalyze the transfer of sulfate to position 6 of non-reducing N-acetylglucosamine (GlcNAc) residues within keratan-like structures on N-linked glycans and within mucin-associated glycans that can ultimately serve as SELL ligands. SELL ligands are present in high endothelial cells (HEVs) and play a central role in lymphocyte homing at sites of inflammation. Participates in biosynthesis of the SELL ligand sialyl 6-sulfo Lewis X and in lymphocyte homing to Peyer patches. Has no activity toward O-linked sugars. Its substrate specificity may be influenced by its subcellular location. Sulfates GlcNAc residues at terminal, non-reducing ends of oligosaccharide chains. The sequence is that of Carbohydrate sulfotransferase 2 (CHST2) from Homo sapiens (Human).